Reading from the N-terminus, the 308-residue chain is MAKHQSVLLHESIKGLAIKADGIYFDGTFGRGGHSREILNHLSDKGRLFAIDKDLDAVQYAKDYFGLDKRFQIFHGSFAQIKEFASQAGVIGAVDGILLDLGVSSPQLDNPERGFSFMLQGPLDMRMDLTQSINAANFVNEAEVNELAHVFRAYGEERFAGRIAKAIVDARKLKPITTTLELAEIVKEANPKWEKHKHPATRVFQAIRIHVNQELTDLSNCLEQCLDVLGPRGRLAVISFHSLEDRIVKQFMRDKEQGNRPPVEVPIKYEELKTNFKRVGKAVKPQSSEIKENVRSRSAVLRIGEKLA.

S-adenosyl-L-methionine-binding positions include 32–34 (GGH), aspartate 52, phenylalanine 78, aspartate 100, and glutamine 107.

Belongs to the methyltransferase superfamily. RsmH family.

It is found in the cytoplasm. It carries out the reaction cytidine(1402) in 16S rRNA + S-adenosyl-L-methionine = N(4)-methylcytidine(1402) in 16S rRNA + S-adenosyl-L-homocysteine + H(+). Specifically methylates the N4 position of cytidine in position 1402 (C1402) of 16S rRNA. In Legionella pneumophila (strain Corby), this protein is Ribosomal RNA small subunit methyltransferase H.